The following is a 377-amino-acid chain: RCC1 domain-containing protein 1 (377 aa).

The tract at residues 1–172 (MAEKRHGAWF…VRQLELGAEH (172 aa)) is interaction with KDM8. An RCC1 1 repeat occupies 6 to 57 (HGAWFGFGFCGFGQALGSGNSHHSVYSPEPLHASDDICQVSAGWSYTALVTR). The residue at position 144 (arginine 144) is a (3R)-3-hydroxyarginine. RCC1 repeat units follow at residues 179–230 (AGQV…CLSE), 232–289 (GDIY…IAIQ), and 319–372 (TGEL…VYAM).

In terms of assembly, found in a complex with KDM8. Interacts (via N-terminus) with KDM8 (via N-terminus). Specifically hydroxylated (with R stereochemistry) at C-3 of ARG-141 by KDM8.

The protein resides in the chromosome. Its function is as follows. Plays a role in transcriptional repression of satellite repeats, possibly by regulating H3K36 methylation levels in centromeric regions together with KDM8. Possibly together with KDM8, is involved in proper mitotic spindle organization and chromosome segregation. Plays a role in regulating alpha-tubulin deacetylation and cytoskeletal microtubule stability, thereby promoting cell migration and TGF-beta-induced epithelial to mesenchymal transition (EMT), potentially through the inhibition of KDM8. This is RCC1 domain-containing protein 1 (Rccd1) from Mus musculus (Mouse).